A 101-amino-acid polypeptide reads, in one-letter code: Guanyl-specific ribonuclease St (101 aa).

A disulfide bridge links Cys-4 with Cys-54. Glu-61 serves as the catalytic Proton acceptor. Catalysis depends on His-91, which acts as the Proton donor.

It belongs to the ribonuclease N1/T1 family.

The enzyme catalyses [RNA] containing guanosine + H2O = an [RNA fragment]-3'-guanosine-3'-phosphate + a 5'-hydroxy-ribonucleotide-3'-[RNA fragment].. This chain is Guanyl-specific ribonuclease St, found in Saccharopolyspora erythraea (Streptomyces erythraeus).